The sequence spans 207 residues: TM2 domain-containing protein 1 (207 aa).

The first 37 residues, 1–37 (MAAAWPSGPSAPEAVTARLVGVLWFVSVTTGPWGAVA), serve as a signal peptide directing secretion. The Extracellular segment spans residues 40–128 (AGGEESLKCE…YSYKVAVALS (89 aa)). 4 N-linked (GlcNAc...) asparagine glycosylation sites follow: asparagine 72, asparagine 75, asparagine 87, and asparagine 96. Residues 118-166 (GYSYKVAVALSLFLGWLGADRFYLGYPALGLLKFCTVGFCGIGSLIDFI) enclose the TM2 domain. A helical transmembrane segment spans residues 129–149 (LFLGWLGADRFYLGYPALGLL). At 150–153 (KFCT) the chain is on the cytoplasmic side. A helical membrane pass occupies residues 154-174 (VGFCGIGSLIDFILISMQIVG). Residues 175-207 (PSDGSSYIIDYYGTRLTRLSITNETFRKTQLYP) are Extracellular-facing. N-linked (GlcNAc...) asparagine glycosylation occurs at asparagine 197.

This sequence belongs to the TM2 family. As to quaternary structure, interacts with APP beta-APP42 (amyloid-beta protein 42). Post-translationally, N-glycosylated. In terms of tissue distribution, widely expressed.

It is found in the membrane. In terms of biological role, may participate in amyloid-beta-induced apoptosis via its interaction with beta-APP42. This Homo sapiens (Human) protein is TM2 domain-containing protein 1 (TM2D1).